The sequence spans 764 residues: E3 ubiquitin-protein ligase CBL-B-B (764 aa).

Positions 1–19 (MASSSSSSSNSSTSSSALS) are enriched in low complexity. Positions 1–27 (MASSSSSSSNSSTSSSALSGRLPGARS) are disordered. The interval 48 to 180 (PPKQAAADRR…KAIFPSGQFQ (133 aa)) is 4H. The region spanning 48 to 356 (PPKQAAADRR…GRSYNPDLTD (309 aa)) is the Cbl-PTB domain. Residues 181–253 (GDTFRITKAD…FEFDIFARLF (73 aa)) form an EF-hand-like region. Asp234, Thr236, Asn238, Tyr240, and Glu245 together coordinate Ca(2+). The SH2-like stretch occupies residues 254–356 (QPWSSILRNW…GRSYNPDLTD (103 aa)). Arg299 is a binding site for 4-O-phospho-L-tyrosine. The interval 357–385 (LCEPTPHDHIKVTQEQYELYCEMGSTFQL) is linker. The segment at 386 to 425 (CKICAENDKDVKIEPCGHLMCTSCLTSWQESDGQGCPFCR) adopts an RING-type zinc-finger fold. 2 disordered regions span residues 482-583 (MNER…SRTC) and 707-726 (KVRN…SSHP). Polar residues predominate over residues 485–498 (RQNSPVTSPGSSPL). The span at 556 to 578 (LPAPPPPLREPPPPPERPPPIPP) shows a compositional bias: pro residues.

In terms of assembly, interacts with several SH3 domain-containing proteins and with poly-ubiquitinated proteins.

It is found in the cytoplasm. The enzyme catalyses S-ubiquitinyl-[E2 ubiquitin-conjugating enzyme]-L-cysteine + [acceptor protein]-L-lysine = [E2 ubiquitin-conjugating enzyme]-L-cysteine + N(6)-ubiquitinyl-[acceptor protein]-L-lysine.. It functions in the pathway protein modification; protein ubiquitination. In terms of biological role, E3 ubiquitin-protein ligase which accepts ubiquitin from specific E2 ubiquitin-conjugating enzymes, and transfers it to substrates, generally promoting their degradation by the proteasome. This chain is E3 ubiquitin-protein ligase CBL-B-B (cblb-b), found in Xenopus laevis (African clawed frog).